We begin with the raw amino-acid sequence, 169 residues long: Large ribosomal subunit protein uL10 (169 aa).

This sequence belongs to the universal ribosomal protein uL10 family. As to quaternary structure, part of the ribosomal stalk of the 50S ribosomal subunit. The N-terminus interacts with L11 and the large rRNA to form the base of the stalk. The C-terminus forms an elongated spine to which L12 dimers bind in a sequential fashion forming a multimeric L10(L12)X complex.

Forms part of the ribosomal stalk, playing a central role in the interaction of the ribosome with GTP-bound translation factors. The chain is Large ribosomal subunit protein uL10 from Rickettsia rickettsii (strain Iowa).